A 172-amino-acid polypeptide reads, in one-letter code: Acetolactate synthase small subunit (172 aa).

The ACT domain occupies 4–79; sequence IITLTVVNRS…DVLKVTDITN (76 aa).

Belongs to the acetolactate synthase small subunit family. Dimer of large and small chains.

It catalyses the reaction 2 pyruvate + H(+) = (2S)-2-acetolactate + CO2. It functions in the pathway amino-acid biosynthesis; L-isoleucine biosynthesis; L-isoleucine from 2-oxobutanoate: step 1/4. The protein operates within amino-acid biosynthesis; L-valine biosynthesis; L-valine from pyruvate: step 1/4. The polypeptide is Acetolactate synthase small subunit (ilvH) (Bacillus subtilis (strain 168)).